We begin with the raw amino-acid sequence, 231 residues long: Chromosome partition protein MukE (231 aa).

The disordered stretch occupies residues 195-231; sequence MIRDGEAMPVEGSLSLKDDSDDNDRTDDTAPETGEDE. Positions 213–231 are enriched in acidic residues; sequence DSDDNDRTDDTAPETGEDE.

The protein belongs to the MukE family. Interacts, and probably forms a ternary complex, with MukF and MukB. The complex formation is stimulated by calcium or magnesium.

It localises to the cytoplasm. The protein localises to the nucleoid. Functionally, involved in chromosome condensation, segregation and cell cycle progression. May participate in facilitating chromosome segregation by condensation DNA from both sides of a centrally located replisome during cell division. Probably acts via its interaction with MukB and MukF. In Pectobacterium atrosepticum (strain SCRI 1043 / ATCC BAA-672) (Erwinia carotovora subsp. atroseptica), this protein is Chromosome partition protein MukE.